A 432-amino-acid polypeptide reads, in one-letter code: Meiotically up-regulated gene 134 protein (432 aa).

It belongs to the UPF0300 family.

Its subcellular location is the cytoplasm. The protein localises to the cell cortex. Has a role in meiosis. The polypeptide is Meiotically up-regulated gene 134 protein (mug134) (Schizosaccharomyces pombe (strain 972 / ATCC 24843) (Fission yeast)).